We begin with the raw amino-acid sequence, 246 residues long: MVRQMLIFDMDGTLTDPVQVINNDVKDILRRCKRKNFEIAVVSGSKYEKIKGQLNDGFIDEFDYVFSENGTQVYVKNVLVKSLDITEAIPETKLRKMVEFCLRYIADLDIPTKRGTFIEHRKSLINICPPGRNCSMVDRRRFVEYDSIHHVRQKLIQVLKSQFDSDDCPLSFVAGGQISIDVYPKAWSKSIALSHIGKCDVIHFFGDNTREGGNDFEIYNHPDVIGHTVTGYKDLVNQLEELLAKS.

Residue aspartate 9 is the Nucleophile of the active site. The Mg(2+) site is built by aspartate 9 and aspartate 11. Aspartate 11 (proton donor/acceptor) is an active-site residue. Residues arginine 121, arginine 132, arginine 139, serine 179, and aspartate 181 each coordinate alpha-D-mannose 1-phosphate. Position 207 (aspartate 207) interacts with Mg(2+).

This sequence belongs to the eukaryotic PMM family. As to quaternary structure, homodimer.

The protein resides in the cytoplasm. The enzyme catalyses alpha-D-mannose 1-phosphate = D-mannose 6-phosphate. The protein operates within nucleotide-sugar biosynthesis; GDP-alpha-D-mannose biosynthesis; alpha-D-mannose 1-phosphate from D-fructose 6-phosphate: step 2/2. In terms of biological role, involved in the synthesis of the GDP-mannose and dolichol-phosphate-mannose required for a number of critical mannosyl transfer reactions. The protein is Phosphomannomutase (PMM) of Babesia bovis.